Reading from the N-terminus, the 474-residue chain is 15-cis-phytoene desaturase (474 aa).

The protein belongs to the carotenoid/retinoid oxidoreductase family.

The protein localises to the cell membrane. The enzyme catalyses 2 a plastoquinone + 15-cis-phytoene = 9,9',15-tri-cis-zeta-carotene + 2 a plastoquinol. It functions in the pathway carotenoid biosynthesis; lycopene biosynthesis. With respect to regulation, inhibited by the herbicide norflurazon in a non-competitive way. Functionally, this enzyme converts phytoene into zeta-carotene via the intermediary of phytofluene by the symmetrical introduction of two double bonds at the C-11 and C-11' positions of phytoene. Also active with phytofluene and 1,2-epoxyphytoene as substrates. The polypeptide is 15-cis-phytoene desaturase (pds) (Synechococcus elongatus (strain ATCC 33912 / PCC 7942 / FACHB-805) (Anacystis nidulans R2)).